Consider the following 339-residue polypeptide: Anthranilate phosphoribosyltransferase (339 aa).

Residues G81, 84-85 (GD), S89, 91-94 (NVST), 109-117 (KHGNRALSS), and A121 each bind 5-phospho-alpha-D-ribose 1-diphosphate. G81 is an anthranilate binding site. Residue S93 participates in Mg(2+) binding. N112 provides a ligand contact to anthranilate. Residue R167 coordinates anthranilate. Residues D226 and E227 each contribute to the Mg(2+) site.

It belongs to the anthranilate phosphoribosyltransferase family. As to quaternary structure, homodimer. Mg(2+) is required as a cofactor.

It carries out the reaction N-(5-phospho-beta-D-ribosyl)anthranilate + diphosphate = 5-phospho-alpha-D-ribose 1-diphosphate + anthranilate. Its pathway is amino-acid biosynthesis; L-tryptophan biosynthesis; L-tryptophan from chorismate: step 2/5. Functionally, catalyzes the transfer of the phosphoribosyl group of 5-phosphorylribose-1-pyrophosphate (PRPP) to anthranilate to yield N-(5'-phosphoribosyl)-anthranilate (PRA). This chain is Anthranilate phosphoribosyltransferase, found in Rhodopseudomonas palustris (strain BisA53).